The sequence spans 229 residues: Thiamine-phosphate synthase (229 aa).

Residues 38–42 and Asn73 contribute to the 4-amino-2-methyl-5-(diphosphooxymethyl)pyrimidine site; that span reads QFREK. Mg(2+)-binding residues include Asp74 and Asp93. Ser111 contacts 4-amino-2-methyl-5-(diphosphooxymethyl)pyrimidine. 137–139 provides a ligand contact to 2-[(2R,5Z)-2-carboxy-4-methylthiazol-5(2H)-ylidene]ethyl phosphate; it reads TLS. Lys140 provides a ligand contact to 4-amino-2-methyl-5-(diphosphooxymethyl)pyrimidine. 2-[(2R,5Z)-2-carboxy-4-methylthiazol-5(2H)-ylidene]ethyl phosphate is bound by residues Gly169 and 189–190; that span reads IS.

The protein belongs to the thiamine-phosphate synthase family. Mg(2+) serves as cofactor.

It catalyses the reaction 2-[(2R,5Z)-2-carboxy-4-methylthiazol-5(2H)-ylidene]ethyl phosphate + 4-amino-2-methyl-5-(diphosphooxymethyl)pyrimidine + 2 H(+) = thiamine phosphate + CO2 + diphosphate. It carries out the reaction 2-(2-carboxy-4-methylthiazol-5-yl)ethyl phosphate + 4-amino-2-methyl-5-(diphosphooxymethyl)pyrimidine + 2 H(+) = thiamine phosphate + CO2 + diphosphate. The catalysed reaction is 4-methyl-5-(2-phosphooxyethyl)-thiazole + 4-amino-2-methyl-5-(diphosphooxymethyl)pyrimidine + H(+) = thiamine phosphate + diphosphate. It functions in the pathway cofactor biosynthesis; thiamine diphosphate biosynthesis; thiamine phosphate from 4-amino-2-methyl-5-diphosphomethylpyrimidine and 4-methyl-5-(2-phosphoethyl)-thiazole: step 1/1. Its function is as follows. Condenses 4-methyl-5-(beta-hydroxyethyl)thiazole monophosphate (THZ-P) and 2-methyl-4-amino-5-hydroxymethyl pyrimidine pyrophosphate (HMP-PP) to form thiamine monophosphate (TMP). The chain is Thiamine-phosphate synthase from Streptococcus suis (strain 98HAH33).